We begin with the raw amino-acid sequence, 306 residues long: Curved DNA-binding protein (306 aa).

A J domain is found at 5-69 (DYYAIMGVKP…QRRAEYDQLW (65 aa)).

The protein localises to the cytoplasm. The protein resides in the nucleoid. DNA-binding protein that preferentially recognizes a curved DNA sequence. It is probably a functional analog of DnaJ; displays overlapping activities with DnaJ, but functions under different conditions, probably acting as a molecular chaperone in an adaptive response to environmental stresses other than heat shock. Lacks autonomous chaperone activity; binds native substrates and targets them for recognition by DnaK. Its activity is inhibited by the binding of CbpM. In Salmonella arizonae (strain ATCC BAA-731 / CDC346-86 / RSK2980), this protein is Curved DNA-binding protein.